The primary structure comprises 356 residues: Trifolitoxin operon protein TfxC (356 aa).

This is Trifolitoxin operon protein TfxC (tfxC) from Rhizobium leguminosarum bv. trifolii.